Consider the following 122-residue polypeptide: Large ribosomal subunit protein uL14 (122 aa).

It belongs to the universal ribosomal protein uL14 family. As to quaternary structure, part of the 50S ribosomal subunit. Forms a cluster with proteins L3 and L19. In the 70S ribosome, L14 and L19 interact and together make contacts with the 16S rRNA in bridges B5 and B8.

In terms of biological role, binds to 23S rRNA. Forms part of two intersubunit bridges in the 70S ribosome. The chain is Large ribosomal subunit protein uL14 from Magnetococcus marinus (strain ATCC BAA-1437 / JCM 17883 / MC-1).